A 160-amino-acid chain; its full sequence is Phosphopantetheine adenylyltransferase (160 aa).

Ser9 contributes to the substrate binding site. Residues 9-10 and His17 each bind ATP; that span reads SF. Substrate-binding residues include Lys41, Leu73, and Arg87. ATP contacts are provided by residues 88 to 90, Glu98, and 123 to 129; these read GLR and YTFLSSS.

Belongs to the bacterial CoaD family. Homohexamer. Mg(2+) is required as a cofactor.

The protein resides in the cytoplasm. The enzyme catalyses (R)-4'-phosphopantetheine + ATP + H(+) = 3'-dephospho-CoA + diphosphate. The protein operates within cofactor biosynthesis; coenzyme A biosynthesis; CoA from (R)-pantothenate: step 4/5. Functionally, reversibly transfers an adenylyl group from ATP to 4'-phosphopantetheine, yielding dephospho-CoA (dPCoA) and pyrophosphate. This Dictyoglomus turgidum (strain DSM 6724 / Z-1310) protein is Phosphopantetheine adenylyltransferase.